Reading from the N-terminus, the 136-residue chain is MARTKQTARKSTGGKAPRKQLASKAARKSAPSTGGVKKPHRYKPGTVALREIRRFQKSTELLIRKLPFQRLVREIAQDFKTDLRFQSSAIGALQESVEAYLVSLFEDTNLCAIHAKRVTIQKKDIQLARRLRGERS.

Residues 1-43 are disordered; the sequence is MARTKQTARKSTGGKAPRKQLASKAARKSAPSTGGVKKPHRYK. K5 is modified (N6,N6,N6-trimethyllysine; alternate). K5 is modified (N6,N6-dimethyllysine; alternate). Residues K5 and K10 each carry the N6-methyllysine; alternate modification. N6-acetyllysine; alternate is present on K10. S11 carries the phosphoserine modification. The residue at position 15 (K15) is an N6,N6-dimethyllysine; alternate. K15, K19, K24, K28, and K37 each carry N6-acetyllysine; alternate. N6-methyllysine; alternate occurs at positions 19, 24, 28, and 37. Residues K28 and K37 each carry the N6,N6,N6-trimethyllysine; alternate modification. N6,N6-dimethyllysine; alternate occurs at positions 28 and 37. N6-acetyllysine is present on residues K57 and K65. Position 80 is an N6,N6,N6-trimethyllysine; alternate (K80). K80 is modified (N6,N6-dimethyllysine; alternate). Residue K80 is modified to N6-methyllysine; alternate.

The protein belongs to the histone H3 family. As to quaternary structure, the nucleosome is a histone octamer containing two molecules each of H2A, H2B, H3 and H4 assembled in one H3-H4 heterotetramer and two H2A-H2B heterodimers. The octamer wraps approximately 147 bp of DNA. Phosphorylated to form H3S10ph. H3S10ph promotes subsequent H3K14ac formation and is required for transcriptional activation through TBP recruitment to the promoters. In terms of processing, mono-, di- and trimethylated by the COMPASS complex to form H3K4me1/2/3. H3K4me activates gene expression by regulating transcription elongation and plays a role in telomere length maintenance. H3K4me enrichment correlates with transcription levels, and occurs in a 5' to 3' gradient with H3K4me3 enrichment at the 5'-end of genes, shifting to H3K4me2 and then H3K4me1. Methylated by SET2 to form H3K36me. H3K36me represses gene expression. Methylated by DOT1 to form H3K79me. H3K79me is required for association of SIR proteins with telomeric regions and for telomeric silencing. The COMPASS-mediated formation of H3K4me2/3 and the DOT1-mediated formation of H3K79me require H2BK123ub1. Post-translationally, acetylation of histone H3 leads to transcriptional activation. H3K14ac formation by GCN5 is promoted by H3S10ph. H3K14ac can also be formed by ESA1. H3K56ac formation occurs predominantly in newly synthesized H3 molecules during G1, S and G2/M of the cell cycle and may be involved in DNA repair.

The protein resides in the nucleus. It localises to the chromosome. Functionally, core component of nucleosome. Nucleosomes wrap and compact DNA into chromatin, limiting DNA accessibility to the cellular machineries which require DNA as a template. Histones thereby play a central role in transcription regulation, DNA repair, DNA replication and chromosomal stability. DNA accessibility is regulated via a complex set of post-translational modifications of histones, also called histone code, and nucleosome remodeling. The sequence is that of Histone H3.1/H3.2 (HHT1) from Meyerozyma guilliermondii (strain ATCC 6260 / CBS 566 / DSM 6381 / JCM 1539 / NBRC 10279 / NRRL Y-324) (Yeast).